Reading from the N-terminus, the 386-residue chain is SET and MYND domain-containing protein DDB_G0273589 (386 aa).

Positions 6 to 294 (NGLELKSSEN…KGDQLTISYI (289 aa)) constitute an SET domain. The segment at 51–94 (CFNCIKQLPSVIKLSLKCNQCNEIWYCNEQCKNENINKHQHYEC) adopts an MYND-type zinc-finger fold. Positions 136–171 (NNKFIEQQLNNNNNNNNDNEQLTNTLDDVFDLVENQ) form a coiled coil.

Belongs to the class V-like SAM-binding methyltransferase superfamily.

Functionally, probable methyltransferase. This is SET and MYND domain-containing protein DDB_G0273589 from Dictyostelium discoideum (Social amoeba).